Consider the following 276-residue polypeptide: Rhomboid protease GlpG (276 aa).

Transmembrane regions (helical) follow at residues 94 to 114, 142 to 162, 168 to 188, 193 to 213, 229 to 249, and 250 to 270; these read AGPLTLSVMVVTIAVFILMQI, ALLHFSLLHILFNLMWWWYLG, VLGTGKLLVIALVSALVSGWA, SGTYFGGLSGVVYALMGYVWL, LMAFALLWLVAGYFDILGMSI, and ANAAHVAGLIVGLLMAFWDTY. The active-site Nucleophile is serine 201. The active site involves histidine 254.

This sequence belongs to the peptidase S54 family.

It localises to the cell inner membrane. It carries out the reaction Cleaves type-1 transmembrane domains using a catalytic dyad composed of serine and histidine that are contributed by different transmembrane domains.. Rhomboid-type serine protease that catalyzes intramembrane proteolysis. The polypeptide is Rhomboid protease GlpG (Pectobacterium atrosepticum (strain SCRI 1043 / ATCC BAA-672) (Erwinia carotovora subsp. atroseptica)).